The chain runs to 964 residues: Phosphoenolpyruvate carboxylase (964 aa).

Ser11 carries the phosphoserine modification. Catalysis depends on residues His172 and Lys600.

It belongs to the PEPCase type 1 family. Homotetramer. The cofactor is Mg(2+).

It localises to the cytoplasm. It catalyses the reaction oxaloacetate + phosphate = phosphoenolpyruvate + hydrogencarbonate. The protein operates within photosynthesis; C4 acid pathway. With respect to regulation, by light-reversible phosphorylation. In terms of biological role, through the carboxylation of phosphoenolpyruvate (PEP) it forms oxaloacetate, a four-carbon dicarboxylic acid source for the tricarboxylic acid cycle. The sequence is that of Phosphoenolpyruvate carboxylase (PPC) from Nicotiana tabacum (Common tobacco).